A 245-amino-acid chain; its full sequence is 2,3-bisphosphoglycerate-dependent phosphoglycerate mutase (245 aa).

Residues 8–15 (RHGQSLWN), 21–22 (TG), R60, 87–90 (ERHY), K98, 114–115 (RR), and 183–184 (GN) each bind substrate. Residue H9 is the Tele-phosphohistidine intermediate of the active site. E87 (proton donor/acceptor) is an active-site residue.

It belongs to the phosphoglycerate mutase family. BPG-dependent PGAM subfamily.

It carries out the reaction (2R)-2-phosphoglycerate = (2R)-3-phosphoglycerate. Its pathway is carbohydrate degradation; glycolysis; pyruvate from D-glyceraldehyde 3-phosphate: step 3/5. Catalyzes the interconversion of 2-phosphoglycerate and 3-phosphoglycerate. The polypeptide is 2,3-bisphosphoglycerate-dependent phosphoglycerate mutase (Bacillus cereus (strain ATCC 14579 / DSM 31 / CCUG 7414 / JCM 2152 / NBRC 15305 / NCIMB 9373 / NCTC 2599 / NRRL B-3711)).